The following is a 291-amino-acid chain: Kidney mitochondrial carrier protein 1 (291 aa).

3 Solcar repeats span residues 7–96 (KPFI…LKRL), 104–189 (ETLV…TKKH), and 198–289 (DTVY…LKKL). Transmembrane regions (helical) follow at residues 9–26 (FIYG…TFPI), 71–89 (GIAP…KIGT), 106–124 (LVLN…SCIA), 164–183 (GVSL…LPVY), 204–224 (FLSS…VDVV), and 264–283 (GFWP…FITY).

Belongs to the mitochondrial carrier (TC 2.A.29) family.

It localises to the mitochondrion inner membrane. It catalyses the reaction sulfite(in) + sulfate(out) = sulfite(out) + sulfate(in). It carries out the reaction thiosulfate(in) + sulfate(out) = thiosulfate(out) + sulfate(in). The enzyme catalyses sulfate(out) + phosphate(in) = sulfate(in) + phosphate(out). The catalysed reaction is oxalate(in) + sulfate(out) = oxalate(out) + sulfate(in). It catalyses the reaction malonate(in) + sulfate(out) = malonate(out) + sulfate(in). It carries out the reaction maleate(in) + sulfate(out) = maleate(out) + sulfate(in). The enzyme catalyses (S)-malate(in) + sulfate(out) = (S)-malate(out) + sulfate(in). The catalysed reaction is (3S)-citramalate(in) + sulfate(out) = (3S)-citramalate(out) + sulfate(in). It catalyses the reaction (3R)-citramalate(in) + sulfate(out) = (3R)-citramalate(out) + sulfate(in). It carries out the reaction sulfate(out) + succinate(in) = sulfate(in) + succinate(out). The enzyme catalyses (S,S)-tartrate(in) + sulfate(out) = (S,S)-tartrate(out) + sulfate(in). The catalysed reaction is (2R,3R)-tartrate(in) + sulfate(out) = (2R,3R)-tartrate(out) + sulfate(in). It catalyses the reaction D-aspartate(in) + sulfate(out) = D-aspartate(out) + sulfate(in). It carries out the reaction L-aspartate(in) + sulfate(out) = L-aspartate(out) + sulfate(in). The enzyme catalyses sulfate(in) = sulfate(out). The catalysed reaction is phosphate(in) = phosphate(out). It catalyses the reaction (S)-malate(out) = (S)-malate(in). In terms of biological role, probable transporter. Its function is as follows. Antiporter that transports inorganic anions (sulfate, sulfite, thiosulfate and phosphate) and, to a lesser extent, a variety of dicarboxylates (e.g. malonate, malate and citramalate) and, even more so, aspartate. The sulfate/sulfate exchange is much higher than the phosphate/phosphate and malate/malate exchanges. The transport affinities is higher for sulfate and thiosulfate than for any other substrate. May catalyze the export of sulfite and thiosulfate (the hydrogen sulfide degradation products) from the mitochondria, thereby modulating the level of the hydrogen sulfide. Also may mediate a very low unidirectional transport of sulfate, phosphate and (S)-malate. In Xenopus laevis (African clawed frog), this protein is Kidney mitochondrial carrier protein 1.